We begin with the raw amino-acid sequence, 254 residues long: MRIDILTLFPEMFQGPFNHSILKRAQENNLLQIDTINIRDFSQNKHHTVDDTPYGGGAGMVMGPEPLFECFDHLKAKNAGQVGRVIMMCPQGEPFTQEYAKELAREENLVIVCGHYEGIDERVREVLVTDEISIGDYVLTGGELPAMVVVDAVARMIPGVLGETASAEEDSFYNGLLEHPHFTKPREYRGYEVPEILLSGHHGNIRKWRRRQSLLRTLERRPELLKDVELSKEDKKVLLELQNLLLSLNLKQMK.

S-adenosyl-L-methionine-binding positions include Gly-114 and 134 to 139 (IGDYVL).

This sequence belongs to the RNA methyltransferase TrmD family. Homodimer.

It is found in the cytoplasm. The catalysed reaction is guanosine(37) in tRNA + S-adenosyl-L-methionine = N(1)-methylguanosine(37) in tRNA + S-adenosyl-L-homocysteine + H(+). Its function is as follows. Specifically methylates guanosine-37 in various tRNAs. This Desulforamulus reducens (strain ATCC BAA-1160 / DSM 100696 / MI-1) (Desulfotomaculum reducens) protein is tRNA (guanine-N(1)-)-methyltransferase.